The sequence spans 128 residues: Sulfurtransferase TusD (128 aa).

The Cysteine persulfide intermediate role is filled by Cys-78.

The protein belongs to the DsrE/TusD family. As to quaternary structure, heterohexamer, formed by a dimer of trimers. The hexameric TusBCD complex contains 2 copies each of TusB, TusC and TusD. The TusBCD complex interacts with TusE.

The protein resides in the cytoplasm. In terms of biological role, part of a sulfur-relay system required for 2-thiolation of 5-methylaminomethyl-2-thiouridine (mnm(5)s(2)U) at tRNA wobble positions. Accepts sulfur from TusA and transfers it in turn to TusE. The sequence is that of Sulfurtransferase TusD from Escherichia coli O45:K1 (strain S88 / ExPEC).